Reading from the N-terminus, the 519-residue chain is AAA-ATPase At4g30250 (519 aa).

The N-terminal stretch at 1–24 (MSDYWTTMASLLGMLAFCQTIVQL) is a signal peptide. 252 to 259 (GPPGTGKS) provides a ligand contact to ATP. 2 disordered regions span residues 315 to 335 (GKNK…NGSG) and 467 to 519 (KSVG…EKEK). Over residues 479-488 (QEEEEEAEEE) the composition is skewed to acidic residues. Over residues 489–508 (QEKRALDSPNRRNREVCGFR) the composition is skewed to basic and acidic residues. The span at 509-519 (EEEEEEDEKEK) shows a compositional bias: acidic residues.

Belongs to the AAA ATPase family. BCS1 subfamily. Mg(2+) is required as a cofactor.

The enzyme catalyses ATP + H2O = ADP + phosphate + H(+). The sequence is that of AAA-ATPase At4g30250 from Arabidopsis thaliana (Mouse-ear cress).